Reading from the N-terminus, the 198-residue chain is LIM domain-containing protein D (198 aa).

Positions 5-65 constitute an LIM zinc-binding domain; the sequence is GKCTRCQKTV…ANHYPVGGLS (61 aa).

Its subcellular location is the cell projection. It is found in the pseudopodium. The protein resides in the cytoplasm. It localises to the cell cortex. The protein localises to the cytoskeleton. Functionally, binds to F-actin and may modulate the chemotactic response during early development and contribute to the maintenance of the strength of the actin cytoskeleton. The protein is LIM domain-containing protein D (limD) of Dictyostelium discoideum (Social amoeba).